Reading from the N-terminus, the 214-residue chain is Ribosomal RNA small subunit methyltransferase G (214 aa).

S-adenosyl-L-methionine is bound by residues Gly77, Phe82, 128–129 (VE), and Arg143.

This sequence belongs to the methyltransferase superfamily. RNA methyltransferase RsmG family.

The protein localises to the cytoplasm. It catalyses the reaction guanosine(527) in 16S rRNA + S-adenosyl-L-methionine = N(7)-methylguanosine(527) in 16S rRNA + S-adenosyl-L-homocysteine. Specifically methylates the N7 position of guanine in position 527 of 16S rRNA. The protein is Ribosomal RNA small subunit methyltransferase G of Nitrosomonas europaea (strain ATCC 19718 / CIP 103999 / KCTC 2705 / NBRC 14298).